The primary structure comprises 7124 residues: MAKMGKYGLGFKWAPEFPWMLPNASEKLGSPERSEEDGFCPSAAQEPKTKGKTLINHVRVDCSRLPALECCVQSAIIRDIFVDEDPLNVEASTMMALQFGSAVLVKPSKRLSIQAWAKLGVLPKTPAMGLFKRFCLCNTRECVCDAHVAFQLFTVQPDGVCLGNGRFIGWFVPVTAIPAYAKQWLQPWSILLRKGGNKGSVTSGHFRRAVTMPVYDFNVEDACEEVHLNPKGKYSRKAYALLKGYRGVKSILFLDQYGCDYTGRLAKGLEDYGDCTLEEMKELFPVWCDSLDNEVVVAWHVDRDPRAVMRLQTLATIRSIGYVGQPTEDLVDGDVVVREPAHLLAANAIVKRLPRLVETMLYTDSSVTEFCYKTKLCDCGFITQFGYVDCCGDACDFRGWVPGNMMDGFLCPGCSKSYMPWELEAQSSGVIPKGGVLFTQSTDTVNRESFKLYGHAVVPFGSAVYWSPYPGMWLPVIWSSVKSYADLTYTGVVGCKAIVQETDAICRSLYMDYVQHKCGNLEQRAILGLDDVYHRQLLVNRGDYSLLLENVDLFVKRRAEFACKFATCGDGLVPLLLDGLVPRSYYLIKSGQAFTSMMVNFSHEVTDMCMDMALLFMHDVKVATKYVKKVTGKLAVRFKALGVAVVRKITEWFDLAVDTAASAAGWLCYQLVNGLFAVANGGITFLSDVPELVKNFVDKFKVFFKVLIDSMSVSVLSGLTVVKTASNRVCLAGCKVYEVVQKRLSAYVMPVGCNEATCLVGEIEPAVVEDDVVDVVKAPLTYQGCCKPPTSFEKICVVDKLYMAKCGDQFYPVVVDNDTIGVLDQCWRFPCAGKKVEFNDKPKVKEIPSTRKIKINFALDATFDSVLSKACSEFEVDKDVTLDELLDVVLDAVESTLSPCKEHDVIGTKVCALLNRLAEDYVYLFDEGGEEVIAPKMYCSFSAPDDEDCVAADVVDADENQGDDADDSAALVTDTQEEDGVAKGQVGVAESDARLDQVEAFDIEKVEDPILNELSAELNAPADKTYEDVLAFDAIYSEALSAFYAVPGDETHFKVCGFYSPAIERTNCWLRSTLIVMQSLPLEFKDLEMQKLWLSYKSSYNKEFVDKLVKSVPKSIILPQGGYVADFAYFFLSQCSFKAYANWRCLKCDMDLKLQGLDAMFFYGDVVSHVCKCGTGMTLLSADIPYTLHFGLRDDKFCAFYTPRKVFRAACVVDVNDCHSMAVVDGKQIDGKVVTKFNGDKYDFMVGHGMAFSMSAFEIAQLYGSCITPNVCFVKGDVIKVLRRVGAEVIVNPANGRMAHGAGVAGAIAKAAGKSFIKETADMVKNQGVCQVGECYESTGGNLCKTVLNIVGPDARGHGKQCYSFLERAYQHINKCDDVVTTLISAGIFSVPTDVSLTYLIGVVTKNVILVSNNKDDFDVIEKCQVTSIAGTKALSLQLAKNLCRDVKFETNACDSLFSDSCFVSSYDVLQEVELLRHDIQLDDDARVFVQAHMDNLPADWRLVNKFDSVDGVRTVKYFECPGEIFVSSQGKKFGYVQNGSFKVASVSQIRALLANKVDVLCTVDGVNFRSCCVAEGEVFGKTLGSVFCDGINVTKVRCSAIHKGKVFFQYSGLSAADLVAVTDAFGFDEPQLLKYYNMLGMCKWPVVVCGNYFAFKQSNNNCYINVACLMLQHLSLKFHKWQWQEAWNEFRSGKPLRFVSLVLAKGSFKFNEPSDSTDFMRVVLREADLSGATCDFEFVCKCGVKQEQRKGVDAVMHFGTLDKGDLAKGYTIACTCGNKLVHCTQLNVPFLICSNKPEGKKLPDDVVAANIFTGGSLGHYTHVKCKPKYQLYDACNVSKVSEAKGNFTDCLYLKNLKQTFSSKLTTFYLDDVKCVEYNPDLSQYYCESGKYYTKPIIKAQFRTFEKVEGVYTNFKLVGHSIAEKFNAKLGFDCNSPFTEYKITEWPTATGDVVLASDDLYVSRYSGGCVTFGKPVIWLGHEEASLKSLTYFNRPSVVCENKFNVLPVDVSEPTDKGPVPAAVLVTGALSGAATAPGTAKEQKVCASDSVVDQVVSGFLSDLSGATVDVKEVKLNGVKKPIKVEDSVVVNDPTSETKVVKSLSIVDVYDMFLTGCRYVVWMANELSRLVNSPTVREYVKWGMTKIVIPAKLVLLRDEKQEFVAPKVVKAKVIACYSAVKWFFLYCFSWIKFNTDNKVIYTTEVASKLTFNLCCLAFKNALQTFNWNVVSRGFFLVATVFLLWFNFLYANVILSDFYLPNIGFFPTFVGQIVAWVKTTFGIFTLCDLYQVSDVGYRSSFCNGSMVCELCFSGFDMLDNYDAINVVQHVVDRRVSFDYISLFKLVVELVIGYSLYTVCFYPLFGLIGMQLLTTWLPEFFMLETMHWSARFFVFVANMLPAFTLLRFYIVVTAMYKIFCLCRHVMYGCSRPGCLFCYKRNRSVRVKCSTVVGGTLRYYDVMANGGTGFCAKHQWNCLNCSAFGPGNTFITHEAAADLSKELKRPVNPTDSAYYLVTEVKQVGCSMRLFYERDGQRVYDDVSASLFVDMNGLLHSKVKGVPETHVVVVENEADKAGFLNAAVFYAQSLYRPMLLVEKKLITTANTGLSVSQTMFDLYVDSLLGVLDVDRKSLTSFVNAAHNSLKEGVQLEQVMDTFIGCARRKCAIDSDVETKSITKSIMSAVNAGVDFTDESCNNLVPTYVKSDTIVAADLGVLIQNNAKHVQANVAKAANVACIWSVDAFNQLSADLQHRLRKACSKTGLKIKLTYNKQEANVPILTTPFSLKGGAVFSKVLQWLFVVNLICFIVLWALMPTYAVHKSDMQLPLYASFKVIDNGVLRDVTVTDACFANKFIQFDQWYESTFGLVYYRNSRACPVVVAVIDQDIGYTLFNVPTKVLRYGFHVLHFITHAFATDSVQCYTPHMQIPYDNFYASGCVLSSLCTMLAHADGTPHPYCYTEGIMHNASLYDSLAPHVRYNLANSNGYIRFPEVVSEGIVRIVRTRSMTYCRVGLCEDAEEGVCFNFNSSWVLNNPYYRAMPGTFCGRNAFDLIHQVLGGLVRPIDFFALTASSVAGAILAIIVVLAFYYLIKLKRAFGDYTSVVVINVIVWCINFLMLFVFQVYPTLSCLYACFYFYTTLYFPSEISVVMHLQWLVMYGAIMPLWFCIIYVAVVVSNHALWLFSYCRKLGTEVRSDGTFEEMSLTTFMITKESYCKLKNSVSDVAFNRYLSLYNKYRYFSGKMDTAAYREAACSQLAKAMETFNHNNGNDVLYQPPTASVTTSFLQSGIVKMVFPTSKVEPCVVSVTYGNMTLNGLWLDDKVYCPRHVICSSADMTDPDYSNLLCRVISSDFCVMSGRMSLTVMSYQMQGSLLVLTVTLQNPNTPKYSFGVVKPGETFTVLAAYNGKSQGAFHVTMRSSYTIKGSFLCGSCGSVGYVLTGDSVRFVYMHQLELSTGCHTGTDFSGNFYGPYRDAQVVQLPVQDYTQTVNVVAWLYAAILNRCNWFVQSDSCSLEEFNVWAMTNGFSSIKADLVLDALASMTGVTVEQILAAIKRLYSGFQGKQILGSCVLEDELTPSDVYQQLAGVKLQSKRTRVVKGTCCWILASTLLFCSIISAFVKWTMFMYVTTHMLGVTLCALCFVSFAMLLVKHKHLYLTMFIMPVLCTLFYTNYLVVYKQSFRGLAYAWLSHFVPAVDYTYMDEVLYGVVLLVAMVFVTMRSINHDVFSVMFLVGRLVSLVSMWYFGANLEEEVLLFLTSLFGTYTWTTMLSLATAKVIAKWLAVNVLYFTDVPQVKLVLLSYLCIGYVCCCYWGVLSLLNSIFRMPLGVYNYKISVQELRYMNANGLRPPRNSFEALVLNFKLLGIGGVPVIEVSQIQSRLTDVKCVNVVLLNCLQHLHIASSSKLWQYCSTLHNEILATSDLSVAFDKLAQLLVVLFANPAAVDSKCLASIEEVSDDYVRDSTVLQALQSEFVNMASFVEYELAKKNLDEAKASGSANQQQIKQLEKACNIAKSAYERDRAVARKLERMADLALTNMYKEARINDKKSKVVSALQTMLFSMIRKLDNQALNSILDNAVKGCVPLNAIPSLTSNTLTIIVPDKQVFDQVVDNVYVTYAGNVWHIQSIQDADGAVKQLNEIDVNITWPLVIAANRHNEVSSVVLQNNELMPQKLRTQVVNSGSDMNCNTPTQCYYNTTGMGKIVYAILSDCDGLKYTKIVKEDGNCVVLELDPPCKFSVQDVKGLKIKYLYFVKGCNTLARGWVVGTLSSTVRLQAGTATEYASNSAIRSLCAFSVDPKKTYLDYIQQGGAPVTNCVKMLCDHAGTGMAITIKPEATTNQDSYGGASVCIYCRSRVEHPDVDGLCKLRGKFVQVPLGIKDPVSYVLTHDVCQVCGFWRDGSCSCVGTGSQFQSKDTNFLNRVRGTSVNARLVPCASGLDTDVQLRAFDICNANRAGIGLYYKVNCCRFQRADEDGNTLDKFFVIKRTNLEVYNKEKECYELTKECGVVAEHEFFTFDVEGSRVPHIVRKDLSKYTMLDLCYALRHFDRNDCSTLKEILLTYAECDESYFQKKDWYDFVENSDIINVYKKLGPIFNRALLNTAKFADTLVEAGLVGVLTLDNQDLYGQWYDFGDFVKTVPGCGVAVADSYYSYMMPMLTMCHALDSELFINGTYREFDLVQYDFTDFKLELFNKYFKYWSMTYHPNTCECEDDRCIIHCANFNILFSMVLPKTCFGPLVRQIFVDGVPFVVSIGYHYKELGVVMNMDVDTHRYRLSLKDLLLYAADPALHVASASALLDLRTCCFSVAAITSGVKFQTVKPGNFNQDFYEFILSKGLLKEGSSVDLKHFFFTQDGNAAITDYNYYKYNLPTMVDIKQLLFVLEVVNKYFEIYDGGCIPATQVIVNNYDKSAGYPFNKFGKARLYYEALSFEEQDEVYAYTKRNVLPTLTQMNLKYAISAKNRARTVAGVSILSTMTGRMFHQKCLKSIAATRGVPVVIGTTKFYGGWDDMLRRLIKDVDSPVLMGWDYPKCDRAMPNILRIISSLVLARKHDSCCSHTDRFYRLANECAQVLSEIVMCGGCYYVKPGGTSSGDATTAFANSVFNICQAVSANVCSLMACNGHKIEDLSIRELQKRLYSNVYRADHVDPAFVNEYYEFLNKHFSMMILSDDGVVCYNSEFASKGYIANISAFQQVLYYQNNVFMSEAKCWVETDIEKGPHEFCSQHTMLVKMDGDEVYLPYPDPSRILGAGCFVDDLLKTDSVLLIERFVSLAIDAYPLVYHENPEYQNVFRVYLEYIKKLYNDLGNQILDSYSVILSTCDGQKFTDETFYKNMYLRSAVMQSVGACVVCSSQTSLRCGSCIRKPLLCCKCAYDHVMSTDHKYVLSVSPYVCNSPGCDVNDVTKLYLGGMSYYCEDHKPQYSFKLVMNGMVFGLYKQSCTGSPYIEDFNKIASCKWTEVDDYVLANECTERLKLFAAETQKATEESFKQCYASATIREIVSDRELILSWEIGKVRPPLNKNYVFTGYHFTSNGKTVLGEYVFDKSELTNGVYYRATTTYKLSVGDVFILTSHAVSSLSAPTLVPQENYTSIRFASVYSVPETFQNNVPNYQHIGMKRYCTVQGPPGTGKSHLAIGLAVYYCTARVVYTAASHAAVDALCEKAYKFLNINDCTRIVPAKVRVDCYDKFKVNDTTRKYVFTTINALPELVTDIIVVDEVSMLTNYELSVINSRVRAKHYVYIGDPAQLPAPRVLLNKGTLEPRYFNSVTKLMCCLGPDIFLGTCYRCPKEIVDTVSALVYHNKLKAKNDNSSMCFKVYYKGQTTHESSSAVNMQQIYLISKFLKANPSWSNAVFISPYNSQNYVAKRVLGLQTQTVDSAQGSEYDFVIYSQTAETAHSVNVNRFNVAITRAKKGILCVMSSMQLFESLNFSTLTLDKINNPRLQCTTNLFKDCSRSYAGYHPAHAPSFLAVDDKYKVGGDLAVCLNVADSAVTYSRLISLMGFKLDLTLDGYCKLFITRDEAIRRVRAWVGFDAEGAHATRDSIGTNFPLQLGFSTGIDFVVEATGMFAERDGYVFKKAVARAPPGEQFKHLVPLMSRGQKWDVVRIRIVQMLSDHLVDLADSVVLVTWAASFELTCLRYFAKVGKEVVCSVCNKRATCFNSRTGYYGCWRHSYSCDYLYNPLIVDIQQWGYTGSLTSNHDLICSVHKGAHVASSDAIMTRCLAVHDCFCKSVNWSLEYPIISNEVSVNTSCRLLQRVMFRAAMLCNRYDVCYDIGNPKGLACVKGYDFKFYDASPVVKSVKQFVYKYEAHKDQFLDGLCMFWNCNVDKYPANAVVCRFDTRVLNKLNLPGCNGGSLYVNKHAFHTSPFTRAAFENLKPMPFFYYSDTPCVYMEGMESKQVDYVPLRSATCITRCNLGGAVCLKHAEDYREYLESYNTATTAGFTFWVYKTFDFYNLWNTFTRLQSLENVVYNLVNAGHFDGRAGELPCAVIGEKVIAKIQNEDVVVFKNNTPFPTNVAVELFAKRSIRPHPELKLFRNLNIDVCWSHVLWDYAKDSVFCSSTYKVCKYTDLQCIESLNVLFDGRDNGALEAFKKCRDGVYINTTKIKSLSMIKGPQRADLNGVVVEKVGDSDVEFWFAMRRDGDDVIFSRTGSLEPSHYRSPQGNPGGNRVGDLSGNEALARGTIFTQSRFLSSFAPRSEMEKDFMDLDEDVFIAKYSLQDYAFEHVVYGSFNQKIIGGLHLLIGLARRQQKSNLVIQEFVPYDSSIHSYFITDENSGSSKSVCTVIDLLLDDFVDIVKSLNLNCVSKVVNVNVDFKDFQFMLWCNEEKVMTFYPRLQAAADWKPGYVMPVLYKYLESPLERVNLWNYGKPITLPTGCLMNVAKYTQLCQYLNTTTLAVPANMRVLHLGAGSDKDVAPGSAVLRQWLPAGSILVDNDINPFVSDSVASYYGNCITLPIACQWDLIISDMYDPLTKNIGEYNVSKDGFFTYLCHLIRDKLALGGSVAIKITEFSWNAELYSLMGKFAFWTIFCTNVNASSSEGFLIGINWLNRTRTEIDGKTMHANYLFWRNSTMWNGGAYSLFDMSKFPLKVAGTAVVSLKPDQINDLVLSLIEKGKLLVRDTRKEVFVGDSLVNVK.

A disordered region spans residues 25–45 (SEKLGSPERSEEDGFCPSAAQ). One can recognise a CoV Nsp1 globular domain in the interval 54–196 (LINHVRVDCS…PWSILLRKGG (143 aa)). One can recognise a BetaCoV Nsp1 C-terminal domain in the interval 217–247 (FNVEDACEEVHLNPKGKYSRKAYALLKGYRG). A CoV Nsp2 N-terminal domain is found at 251–511 (ILFLDQYGCD…TDAICRSLYM (261 aa)). Zn(2+) contacts are provided by cysteine 390, cysteine 395, cysteine 411, and cysteine 414. The interval 390-414 (CCGDACDFRGWVPGNMMDGFLCPGC) is C4. One can recognise a CoV Nsp2 middle domain in the interval 518 to 706 (CGNLEQRAIL…VDKFKVFFKV (189 aa)). The CoV Nsp2 C-terminal domain occupies 726 to 832 (SNRVCLAGCK…LDQCWRFPCA (107 aa)). The Ubiquitin-like 1 domain maps to 834-946 (KKVEFNDKPK…MYCSFSAPDD (113 aa)). Residues 1031 to 1268 (AFDAIYSEAL…IAQLYGSCIT (238 aa)) form the Peptidase C16 1 domain. Catalysis depends on cysteine 1068, which acts as the For PL1-PRO activity. The Zn(2+) site is built by cysteine 1145, cysteine 1148, cysteine 1171, and cysteine 1173. Residues 1145–1173 (CLKCDMDLKLQGLDAMFFYGDVVSHVCKC) form a C4-type 1 zinc finger. Active-site for PL1-PRO activity residues include histidine 1219 and aspartate 1230. Residues 1269-1429 (PNVCFVKGDV…VIEKCQVTSI (161 aa)) enclose the Macro domain. The DPUP domain occupies 1484 to 1556 (DDARVFVQAH…VSQIRALLAN (73 aa)). The Ubiquitin-like 2 domain maps to 1555–1610 (ANKVDVLCTVDGVNFRSCCVAEGEVFGKTLGSVFCDGINVTKVRCSAIHKGKVFFQ). Residues 1625–1884 (AFGFDEPQLL…CVEYNPDLSQ (260 aa)) enclose the Peptidase C16 2 domain. Residue cysteine 1663 is the For PL2-PRO activity of the active site. Residues cysteine 1741, cysteine 1743, cysteine 1775, and cysteine 1777 each contribute to the Zn(2+) site. The C4-type 2 zinc-finger motif lies at 1741-1777 (CKCGVKQEQRKGVDAVMHFGTLDKGDLAKGYTIACTC). Residues histidine 1820 and aspartate 1834 each act as for PL2-PRO activity in the active site. The region spanning 1898–1999 (IKAQFRTFEK…TYFNRPSVVC (102 aa)) is the Nucleic acid-binding domain. Positions 2053 to 2202 (QVVSGFLSDL…TDNKVIYTTE (150 aa)) constitute a G2M domain. The next 2 membrane-spanning stretches (helical) occupy residues 2232 to 2252 (FFLVATVFLLWFNFLYANVIL) and 2260 to 2280 (IGFFPTFVGQIVAWVKTTFGI). Positions 2232–2408 (FFLVATVFLL…FTLLRFYIVV (177 aa)) are HD1. The 3Ecto domain maps to 2268 to 2329 (GQIVAWVKTT…AINVVQHVVD (62 aa)). Intrachain disulfides connect cysteine 2284–cysteine 2308 and cysteine 2299–cysteine 2305. 2 helical membrane passes run 2346-2366 (LVIGYSLYTVCFYPLFGLIGM) and 2388-2408 (FFVFVANMLPAFTLLRFYIVV). A Y1 region spans residues 2416–2506 (CLCRHVMYGC…ELKRPVNPTD (91 aa)). The region spanning 2416-2783 (CLCRHVMYGC…LTTPFSLKGG (368 aa)) is the CoV Nsp3 Y domain. The Zn(2+) site is built by histidine 2420, cysteine 2425, cysteine 2430, cysteine 2433, cysteine 2466, histidine 2469, cysteine 2473, and cysteine 2476. Positions 2420–2433 (HVMYGCSRPGCLFC) are ZF1. The ZF2 stretch occupies residues 2466–2476 (CAKHQWNCLNC). The segment at 2507–2599 (SAYYLVTEVK…LVEKKLITTA (93 aa)) is Y2. Residues 2507-2783 (SAYYLVTEVK…LTTPFSLKGG (277 aa)) are coV-Y. Residues 2600 to 2682 (NTGLSVSQTM…KSIMSAVNAG (83 aa)) form a Y3 region. Positions 2683 to 2783 (VDFTDESCNN…LTTPFSLKGG (101 aa)) are Y4. The next 7 helical transmembrane spans lie at 2789-2809 (VLQWLFVVNLICFIVLWALMP), 2869-2889 (ACPVVVAVIDQDIGYTLFNVP), 3042-3062 (AFDLIHQVLGGLVRPIDFFAL), 3064-3084 (ASSVAGAILAIIVVLAFYYLI), 3096-3116 (VVVINVIVWCINFLMLFVFQV), 3123-3143 (LYACFYFYTTLYFPSEISVVM), and 3148-3168 (LVMYGAIMPLWFCIIYVAVVV). Positions 2789–3168 (VLQWLFVVNL…FCIIYVAVVV (380 aa)) are HD2. A Nsp4C domain is found at 3182 to 3279 (LGTEVRSDGT…TASVTTSFLQ (98 aa)). In terms of domain architecture, Peptidase C30 spans 3280–3582 (SGIVKMVFPT…YQQLAGVKLQ (303 aa)). Catalysis depends on for 3CL-PRO activity residues histidine 3320 and cysteine 3424. Positions 3525–3808 (LVLDALASMT…VCCCYWGVLS (284 aa)) are HD3. Helical transmembrane passes span 3591–3611 (GTCCWILASTLLFCSIISAFV), 3621–3641 (THMLGVTLCALCFVSFAMLLV), 3647–3667 (YLTMFIMPVLCTLFYTNYLVV), 3690–3710 (TYMDEVLYGVVLLVAMVFVTM), 3717–3737 (VFSVMFLVGRLVSLVSMWYFG), 3744–3764 (VLLFLTSLFGTYTWTTMLSLA), and 3788–3808 (LVLLSYLCIGYVCCCYWGVLS). Residues 3870 to 3958 (SRLTDVKCVN…DYVRDSTVLQ (89 aa)) form the RdRp Nsp7 cofactor domain. A RdRp Nsp8 cofactor domain is found at 3959 to 4155 (ALQSEFVNMA…HNEVSSVVLQ (197 aa)). Residues 4156–4265 (NNELMPQKLR…GTLSSTVRLQ (110 aa)) form the Nsp9 ssRNA-binding domain. Residues 4266–4403 (AGTATEYASN…CVGTGSQFQS (138 aa)) form the ExoN/MTase coactivator domain. Zn(2+)-binding residues include cysteine 4339, cysteine 4342, histidine 4348, cysteine 4355, cysteine 4381, cysteine 4384, cysteine 4392, and cysteine 4394. 2 zinc fingers span residues 4339 to 4355 (CIYCRSRVEHPDVDGLC) and 4381 to 4394 (CQVCGFWRDGSCSC). The NiRAN domain occupies 4408–4663 (FLNRVRGTSV…DSELFINGTY (256 aa)). Mn(2+) is bound by residues asparagine 4611 and aspartate 4620. Positions 4664–4762 (REFDLVQYDF…MNMDVDTHRY (99 aa)) constitute a Nsp12 Interface domain. 5 residues coordinate Zn(2+): histidine 4693, cysteine 4699, cysteine 4704, cysteine 4708, and cysteine 4885. Residues 4763 to 5330 (RLSLKDLLLY…NMYLRSAVMQ (568 aa)) form the Nsp12 RNA-dependent RNA polymerase domain. The tract at residues 4765–4979 (SLKDLLLYAA…HQKCLKSIAA (215 aa)) is rdRp Fingers N-ter. The interval 4980–5018 (TRGVPVVIGTTKFYGGWDDMLRRLIKDVDSPVLMGWDYP) is rdRp Palm N-ter. Positions 5010-5172 (PVLMGWDYPK…CYNSEFASKG (163 aa)) constitute a RdRp catalytic domain. The segment at 5019 to 5077 (KCDRAMPNILRIISSLVLARKHDSCCSHTDRFYRLANECAQVLSEIVMCGGCYYVKPGG) is rdRp Fingers C-ter. Residues histidine 5040, cysteine 5043, and cysteine 5044 each coordinate Zn(2+). Residues 5078-5213 (TSSGDATTAF…EKGPHEFCSQ (136 aa)) are rdRp Palm C-ter. Active-site residues include serine 5157, aspartate 5158, and aspartate 5159. The rdRp Thumb stretch occupies residues 5214–5330 (HTMLVKMDGD…NMYLRSAVMQ (117 aa)). The CV ZBD domain maps to 5331 to 5443 (SVGACVVCSS…EDFNKIASCK (113 aa)). Positions 5335, 5338, 5346, 5349, 5356, 5359, 5363, 5369, 5380, 5385, 5402, and 5405 each coordinate Zn(2+). The (+)RNA virus helicase ATP-binding domain maps to 5586-5767 (SVPETFQNNV…MCCLGPDIFL (182 aa)). Position 5611-5618 (5611-5618 (GPPGTGKS)) interacts with ATP. Residues 5768 to 5937 (GTCYRCPKEI…RLQCTTNLFK (170 aa)) form the (+)RNA virus helicase C-terminal domain. In terms of domain architecture, ExoN spans 6001 to 6216 (LFITRDEAIR…RCLAVHDCFC (216 aa)). Residues aspartate 6019, glutamate 6021, and glutamate 6120 contribute to the active site. Residues cysteine 6136, cysteine 6139, cysteine 6155, histidine 6158, histidine 6186, cysteine 6190, and histidine 6193 each contribute to the Zn(2+) site. Catalysis depends on residues histidine 6197 and aspartate 6202. Position 6208 (cysteine 6208) interacts with Zn(2+). Residues 6225 to 6451 (YPIISNEVSV…NLWNTFTRLQ (227 aa)) enclose the N7-MTase domain. 6260–6266 (DIGNPKG) provides a ligand contact to S-adenosyl-L-methionine. Positions 6338–6352 (CNGGSLYVNKHAFHT) are gpppA-binding. Cysteine 6376, cysteine 6397, cysteine 6408, and histidine 6411 together coordinate Zn(2+). Residues 6452 to 6512 (SLENVVYNLV…NVAVELFAKR (61 aa)) enclose the Nsp15 N-terminal oligomerization domain. In terms of domain architecture, AV-Nsp11N/CoV-Nsp15M spans 6513 to 6633 (SIRPHPELKL…FAMRRDGDDV (121 aa)). The region spanning 6683–6822 (APRSEMEKDF…NEEKVMTFYP (140 aa)) is the NendoU domain. Active-site residues include histidine 6713, histidine 6728, lysine 6768, lysine 6871, aspartate 6955, lysine 6995, and glutamate 7028. The 295-residue stretch at 6827 to 7121 (AADWKPGYVM…KEVFVGDSLV (295 aa)) folds into the Nidovirus-type SAM-dependent 2'-O-MTase domain.

The protein belongs to the coronaviruses polyprotein 1ab family. Interacts with host PHB and PHB2. In terms of assembly, interacts with papain-like protease nsp3 and non-structural protein 6. As to quaternary structure, monomer. Homodimer. Only the homodimer shows catalytic activity. Interacts with nsp8 and nsp12 to form the replication-transcription complex (RTC): nsp12, nsp7, two subunits of nsp8, and up to two subunits of nsp13. In terms of assembly, interacts with nsp7, nsp13 and nsp12 to form the replication-transcription complex (RTC): nsp12, nsp7, two subunits of nsp8, and up to two subunits of nsp13. As to quaternary structure, interacts with nsp12. Interacts with proofreading exoribonuclease nsp14 and 2'-O-methyltransferase nsp16; these interactions enhance nsp14 and nsp16 enzymatic activities. In terms of assembly, interacts with nsp7 and nsp8 to form the replication-transcription complex (RTC): nsp12, nsp7, two subunits of nsp8, and up to two subunits of nsp13. Interacts with nsp9. As to quaternary structure, interacts with nsp8 to form the replication-transcription complex (RTC): nsp12, nsp7, two subunits of nsp8, and up to two subunits of nsp13. Requires Mn(2+) as cofactor. It depends on Mg(2+) as a cofactor. Post-translationally, specific enzymatic cleavages in vivo by its own proteases yield mature proteins. 3CL-PRO and PL-PRO proteinases are autocatalytically processed.

It localises to the host membrane. The protein resides in the host cytoplasm. The protein localises to the host perinuclear region. Its subcellular location is the host endoplasmic reticulum-Golgi intermediate compartment. The enzyme catalyses RNA(n) + a ribonucleoside 5'-triphosphate = RNA(n+1) + diphosphate. It catalyses the reaction ATP + H2O = ADP + phosphate + H(+). The catalysed reaction is Thiol-dependent hydrolysis of ester, thioester, amide, peptide and isopeptide bonds formed by the C-terminal Gly of ubiquitin (a 76-residue protein attached to proteins as an intracellular targeting signal).. It carries out the reaction a 5'-end (N(7)-methyl 5'-triphosphoguanosine)-ribonucleoside in mRNA + S-adenosyl-L-methionine = a 5'-end (N(7)-methyl 5'-triphosphoguanosine)-(2'-O-methyl-ribonucleoside) in mRNA + S-adenosyl-L-homocysteine + H(+). The enzyme catalyses uridylyl-uridylyl-ribonucleotide-RNA = a 3'-end uridylyl-2',3'-cyclophospho-uridine-RNA + a 5'-end dephospho-ribonucleoside-RNA. It catalyses the reaction a 5'-end diphospho-ribonucleoside in mRNA + GTP + H(+) = a 5'-end (5'-triphosphoguanosine)-ribonucleoside in mRNA + diphosphate. The catalysed reaction is a 5'-end (5'-triphosphoguanosine)-ribonucleoside in mRNA + S-adenosyl-L-methionine = a 5'-end (N(7)-methyl 5'-triphosphoguanosine)-ribonucleoside in mRNA + S-adenosyl-L-homocysteine. Functionally, the replicase polyprotein of coronaviruses is a multifunctional protein: it contains the activities necessary for the transcription of negative stranded RNA, leader RNA, subgenomic mRNAs and progeny virion RNA as well as proteinases responsible for the cleavage of the polyprotein into functional products. In terms of biological role, inhibits host translation by interacting with the 40S ribosomal subunit. The nsp1-40S ribosome complex further induces an endonucleolytic cleavage near the 5'UTR of host mRNAs, targeting them for degradation. Viral mRNAs are not susceptible to nsp1-mediated endonucleolytic RNA cleavage thanks to the presence of a 5'-end leader sequence and are therefore protected from degradation. By suppressing host gene expression, nsp1 facilitates efficient viral gene expression in infected cells and evasion from host immune response. Its function is as follows. May play a role in the modulation of host cell survival signaling pathway by interacting with host PHB and PHB2. Indeed, these two proteins play a role in maintaining the functional integrity of the mitochondria and protecting cells from various stresses. Responsible for the cleavages located at the N-terminus of the replicase polyprotein. In addition, PL-PRO possesses a deubiquitinating/deISGylating activity and processes both 'Lys-48'- and 'Lys-63'-linked polyubiquitin chains from cellular substrates. Participates together with nsp4 in the assembly of virally-induced cytoplasmic double-membrane vesicles necessary for viral replication. Antagonizes innate immune induction of type I interferon by blocking the phosphorylation, dimerization and subsequent nuclear translocation of host IRF3. Also prevents host NF-kappa-B signaling. Functionally, participates in the assembly of virally-induced cytoplasmic double-membrane vesicles necessary for viral replication. In terms of biological role, cleaves the C-terminus of replicase polyprotein at 11 sites. Recognizes substrates containing the core sequence [ILMVF]-Q-|-[SGACN]. Also able to bind an ADP-ribose-1''-phosphate (ADRP). Its function is as follows. Plays a role in the initial induction of autophagosomes from host endoplasmic reticulum. Later, limits the expansion of these phagosomes that are no longer able to deliver viral components to lysosomes. Forms a hexadecamer with nsp8 (8 subunits of each) that may participate in viral replication by acting as a primase. Alternatively, may synthesize substantially longer products than oligonucleotide primers. Functionally, forms a hexadecamer with nsp7 (8 subunits of each) that may participate in viral replication by acting as a primase. Alternatively, may synthesize substantially longer products than oligonucleotide primers. In terms of biological role, forms a primer, NSP9-pU, which is utilized by the polymerase for the initiation of RNA chains. Interacts with ribosome signal recognition particle RNA (SRP). Together with NSP8, suppress protein integration into the cell membrane, thereby disrupting host immune defenses. Its function is as follows. Plays a pivotal role in viral transcription by stimulating both nsp14 3'-5' exoribonuclease and nsp16 2'-O-methyltransferase activities. Therefore plays an essential role in viral mRNAs cap methylation. RNA-directed RNA polymerase that catalyzes the transcription of viral genomic and subgenomic RNAs. Acts in complex with nsp7 and nsp8 to transcribe both the minus and positive strands of genomic RNA. The kinase-like NiRAN domain of NSP12 attaches one or more nucleotides to the amino terminus of NSP9, forming a covalent RNA-protein intermediate that serves as transcription/replication primer. Subgenomic RNAs (sgRNAs) are formed by discontinuous transcription: The polymerase has the ability to pause at transcription-regulating sequences (TRS) and jump to the leader TRS, resulting in a major deletion. This creates a series of subgenomic RNAs that are replicated, transcribed and translated. In addition, Nsp12 is a subunit of the viral RNA capping enzyme that catalyzes the RNA guanylyltransferase reaction for genomic and sub-genomic RNAs. Subsequently, the NiRAN domain transfers RNA to GDP, and forms the core cap structure GpppA-RNA. Functionally, multi-functional protein with a zinc-binding domain in N-terminus displaying RNA and DNA duplex-unwinding activities with 5' to 3' polarity. Activity of helicase is dependent on magnesium. In terms of biological role, plays a role in viral RNA synthesis through two distinct activities. The N7-guanine methyltransferase activity plays a role in the formation of the cap structure GpppA-RNA. The proofreading exoribonuclease reduces the sensitivity of the virus to RNA mutagens during replication. This activity acts on both ssRNA and dsRNA in a 3'-5' direction. Its function is as follows. Plays a role in viral transcription/replication and prevents the simultaneous activation of host cell dsRNA sensors, such as MDA5/IFIH1, OAS, and PKR. Acts by degrading the 5'-polyuridines generated during replication of the poly(A) region of viral genomic and subgenomic RNAs. Catalyzes a two-step reaction in which a 2'3'-cyclic phosphate (2'3'-cP) is first generated by 2'-O transesterification, which is then hydrolyzed to a 3'-phosphate (3'-P). If not degraded, poly(U) RNA would hybridize with poly(A) RNA tails and activate host dsRNA sensors. Methyltransferase that mediates mRNA cap 2'-O-ribose methylation to the 5'-cap structure of viral mRNAs. N7-methyl guanosine cap is a prerequisite for binding of nsp16. Therefore plays an essential role in viral mRNAs cap methylation which is essential to evade immune system. In Murine coronavirus (strain 2) (MHV-2), this protein is Replicase polyprotein 1ab (rep).